Reading from the N-terminus, the 317-residue chain is MNKELVILKISGASLKGKNDIIDLDFLREIGRQIKVLSNNYKVAIVLGGGNIWRGNIAKEIGMQRYKADQMGMLATVMNSLALQSLLTNINVKSRIFSTIEMEKIADSYIIRNLEESLNNNEIAILSCGTGRPYFTTDTGVAVSAAELGASYIMMGKNNVDGVYDSDPNKNPNAKFYKHLTYSKAIELGLEVMDITAATICKQSNIKTIVFKMNEKNGILNAFENKSKFTLVSEDEKDLDAFKFGIKNIKNNSEKSSNNWDNKVIDIKTIKEENSLNIDDIFENSIEELQKLKEDDIQKNQKKLNEIIKSFYQDNKE.

ATP is bound at residue 9–12 (KISG). Residue glycine 49 participates in UMP binding. Residues glycine 50 and arginine 54 each coordinate ATP. UMP contacts are provided by residues aspartate 69 and 130 to 137 (TGRPYFTT). Positions 158, 164, and 167 each coordinate ATP.

It belongs to the UMP kinase family. In terms of assembly, homohexamer.

Its subcellular location is the cytoplasm. It catalyses the reaction UMP + ATP = UDP + ADP. The protein operates within pyrimidine metabolism; CTP biosynthesis via de novo pathway; UDP from UMP (UMPK route): step 1/1. Inhibited by UTP. Its function is as follows. Catalyzes the reversible phosphorylation of UMP to UDP. The sequence is that of Uridylate kinase from Malacoplasma penetrans (strain HF-2) (Mycoplasma penetrans).